Consider the following 750-residue polypeptide: MGKSESQMDITDINTPKPKKKQRWTPLEISLSVLVLLLTIIAVTMIALYATYDDGICKSSDCIKSAARLIQNMDATTEPCTDFFKYACGGWLKRNVIPETSSRYGNFDILRDELEVVLKDVLQEPKTEDIVAVQKAKALYRSCINESAIDSRGGEPLLKLLPDIYGWPVATENWEQKYGASWTAEKAIAQLNSKYGKKVLINLFVGTDDKNSVNHVIHIDQPRLGLPSRDYYECTGIYKEACTAYVDFMISVARLIRQEERLPIDENQLALEMNKVMELEKEIANATAKPEDRNDPMLLYNKMTLAQIQNNFSLEINGKPFSWLNFTNEIMSTVNISITNEEDVVVYAPEYLTKLKPILTKYSARDLQNLMSWRFIMDLVSSLSRTYKESRNAFRKALYGTTSETATWRRCANYVNGNMENAVGRLYVEAAFAGESKHVVEDLIAQIREVFIQTLDDLTWMDAETKKRAEEKALAIKERIGYPDDIVSNDNKLNNEYLELNYKEDEYFENIIQNLKFSQSKQLKKLREKVDKDEWISGAAVVNAFYSSGRNQIVFPAGILQPPFFSAQQSNSLNYGGIGMVIGHEITHGFDDNGRNFNKDGDLVDWWTQQSASNFKEQSQCMVYQYGNFSWDLAGGQHLNGINTLGENIADNGGLGQAYRAYQNYIKKNGEEKLLPGLDLNHKQLFFLNFAQVWCGTYRPEYAVNSIKTDVHSPGNFRIIGTLQNSAEFSEAFHCRKNSYMNPEKKCRVW.

The span at 1 to 14 (MGKSESQMDITDIN) shows a compositional bias: polar residues. Residues 1-20 (MGKSESQMDITDINTPKPKK) form a disordered region. Glycine 2 carries N-myristoyl glycine lipidation. At 2–28 (GKSESQMDITDINTPKPKKKQRWTPLE) the chain is on the cytoplasmic side. Residues serine 4 and serine 6 each carry the phosphoserine modification. The Stop-transfer sequence signature appears at 16–23 (PKPKKKQR). A helical; Signal-anchor for type II membrane protein transmembrane segment spans residues 29-51 (ISLSVLVLLLTIIAVTMIALYAT). Topologically, residues 52–750 (YDDGICKSSD…MNPEKKCRVW (699 aa)) are extracellular. The Peptidase M13 domain maps to 56 to 750 (ICKSSDCIKS…MNPEKKCRVW (695 aa)). 6 cysteine pairs are disulfide-bonded: cysteine 57–cysteine 62, cysteine 80–cysteine 735, cysteine 88–cysteine 695, cysteine 143–cysteine 411, cysteine 234–cysteine 242, and cysteine 621–cysteine 747. An a peptide-binding site is contributed by arginine 103. N-linked (GlcNAc...) asparagine glycosylation is present at asparagine 145. Asparagine 285 and asparagine 325 each carry an N-linked (GlcNAc...) asparagine glycan. Histidine 584 contributes to the Zn(2+) binding site. Glutamate 585 is a catalytic residue. A Zn(2+)-binding site is contributed by histidine 588. An N-linked (GlcNAc...) asparagine glycan is attached at asparagine 628. A Zn(2+)-binding site is contributed by glutamate 647. Aspartate 651 acts as the Proton donor in catalysis.

Belongs to the peptidase M13 family. The cofactor is Zn(2+). Post-translationally, myristoylation is a determinant of membrane targeting. Glycosylation at Asn-628 is necessary both for surface expression and neutral endopeptidase activity.

It localises to the cell membrane. It catalyses the reaction Preferential cleavage of polypeptides between hydrophobic residues, particularly with Phe or Tyr at P1'.. It carries out the reaction substance P + H2O = substance P(1-9) + L-Leu-L-Met-NH2. The catalysed reaction is substance P + H2O = substance P(1-7) + L-Phe-Gly-L-Leu-L-Met-NH2. The enzyme catalyses neurotensin + H2O = neurotensin(1-11) + L-isoleucyl-L-leucine. It catalyses the reaction neurotensin + H2O = neurotensin(1-10) + L-tyrosyl-L-isoleucyl-L-leucine. Its activity is regulated as follows. Inhibited in a dose dependent manner by opiorphin. Activated by K49-P1-20, a twenty-residue synthetic peptide shortened from the snake B.asper myotoxin II. In terms of biological role, thermolysin-like specificity, but is almost confined on acting on polypeptides of up to 30 amino acids. Biologically important in the destruction of opioid peptides such as Met- and Leu-enkephalins by cleavage of a Gly-Phe bond. Catalyzes cleavage of bradykinin, substance P and neurotensin peptides. Able to cleave angiotensin-1, angiotensin-2 and angiotensin 1-9. Involved in the degradation of atrial natriuretic factor (ANF) and brain natriuretic factor (BNP(1-32)). Displays UV-inducible elastase activity toward skin preelastic and elastic fibers. This is Neprilysin from Homo sapiens (Human).